The following is an 89-amino-acid chain: Elongation factor 1-beta (89 aa).

It belongs to the EF-1-beta/EF-1-delta family.

Functionally, promotes the exchange of GDP for GTP in EF-1-alpha/GDP, thus allowing the regeneration of EF-1-alpha/GTP that could then be used to form the ternary complex EF-1-alpha/GTP/AAtRNA. The polypeptide is Elongation factor 1-beta (Methanococcus aeolicus (strain ATCC BAA-1280 / DSM 17508 / OCM 812 / Nankai-3)).